Reading from the N-terminus, the 132-residue chain is Ribosome-binding factor A (132 aa).

This sequence belongs to the RbfA family. In terms of assembly, monomer. Binds 30S ribosomal subunits, but not 50S ribosomal subunits or 70S ribosomes.

It localises to the cytoplasm. One of several proteins that assist in the late maturation steps of the functional core of the 30S ribosomal subunit. Associates with free 30S ribosomal subunits (but not with 30S subunits that are part of 70S ribosomes or polysomes). Required for efficient processing of 16S rRNA. May interact with the 5'-terminal helix region of 16S rRNA. The protein is Ribosome-binding factor A of Pseudomonas putida (strain W619).